The sequence spans 387 residues: GTPase Obg (387 aa).

Residues M1–L159 form the Obg domain. The 175-residue stretch at A160–K334 folds into the OBG-type G domain. Residues G166–S173, F191–Q195, D213–G216, S283–D286, and S315–A317 each bind GTP. Residues S173 and T193 each contribute to the Mg(2+) site. The segment at L347–G379 is disordered. Residues Q368 to G379 are compositionally biased toward acidic residues.

Belongs to the TRAFAC class OBG-HflX-like GTPase superfamily. OBG GTPase family. Monomer. It depends on Mg(2+) as a cofactor.

It is found in the cytoplasm. Functionally, an essential GTPase which binds GTP, GDP and possibly (p)ppGpp with moderate affinity, with high nucleotide exchange rates and a fairly low GTP hydrolysis rate. Plays a role in control of the cell cycle, stress response, ribosome biogenesis and in those bacteria that undergo differentiation, in morphogenesis control. In Magnetococcus marinus (strain ATCC BAA-1437 / JCM 17883 / MC-1), this protein is GTPase Obg.